The following is a 375-amino-acid chain: Chaperone protein DnaJ (375 aa).

The J domain maps to 5–70 (DYYDVLGVNR…QKRGAYDQFG (66 aa)). The CR-type zinc finger occupies 135 to 213 (GCEKQIRIPS…CHGAGQKKTT (79 aa)). 8 residues coordinate Zn(2+): C148, C151, C165, C168, C187, C190, C201, and C204. 4 CXXCXGXG motif repeats span residues 148 to 155 (CSTCNGTG), 165 to 172 (CATCGGHG), 187 to 194 (CPTCHGTG), and 201 to 208 (CGSCHGAG).

Belongs to the DnaJ family. As to quaternary structure, homodimer. Zn(2+) serves as cofactor.

It is found in the cytoplasm. Its function is as follows. Participates actively in the response to hyperosmotic and heat shock by preventing the aggregation of stress-denatured proteins and by disaggregating proteins, also in an autonomous, DnaK-independent fashion. Unfolded proteins bind initially to DnaJ; upon interaction with the DnaJ-bound protein, DnaK hydrolyzes its bound ATP, resulting in the formation of a stable complex. GrpE releases ADP from DnaK; ATP binding to DnaK triggers the release of the substrate protein, thus completing the reaction cycle. Several rounds of ATP-dependent interactions between DnaJ, DnaK and GrpE are required for fully efficient folding. Also involved, together with DnaK and GrpE, in the DNA replication of plasmids through activation of initiation proteins. This is Chaperone protein DnaJ from Chromobacterium violaceum (strain ATCC 12472 / DSM 30191 / JCM 1249 / CCUG 213 / NBRC 12614 / NCIMB 9131 / NCTC 9757 / MK).